The following is a 2609-amino-acid chain: Beige protein homolog 1 (2609 aa).

Disordered regions lie at residues 1654–1679 (DSKL…APVS) and 1691–1729 (ILPS…KNRT). Acidic residues predominate over residues 1711–1723 (MEDEEDDVDEEDK). A BEACH-type PH domain is found at 1735–1870 (ESGDSIQDVY…NRDSLYQKLV (136 aa)). Positions 1907 to 2202 (ANALSFSTTH…QVFKKPHPQR (296 aa)) constitute a BEACH domain. 5 WD repeats span residues 2249-2290 (KDEV…QPVM), 2294-2332 (LHSE…PIKA), 2340-2379 (GHRY…FVSS), 2429-2475 (NSDE…NAKL), and 2507-2546 (ATRQ…SNVH). The segment at 2550-2604 (DNTSELCSLCDSRFSLMEWRSQCRACGNSNVCSDCVSMLKDTNIKTCYECYRQMP) adopts an FYVE-type zinc-finger fold.

It localises to the cytoplasm. The protein localises to the membrane. Its function is as follows. May be involved in protein sorting and cell wall formation. The polypeptide is Beige protein homolog 1 (lvs1) (Schizosaccharomyces pombe (strain 972 / ATCC 24843) (Fission yeast)).